Reading from the N-terminus, the 831-residue chain is Prickle-like protein 1 (831 aa).

The region spanning 14-122 (FGCQRSSTSD…TIKLLSRAVM (109 aa)) is the PET domain. 3 LIM zinc-binding domains span residues 124–189 (AVCE…LLKP), 189–249 (PRCS…LYAE), and 249–313 (EYCE…EDVH). The interval 313 to 342 (HASDSSDSAFQSARSRDSRRSVRMGKSSRS) is disordered. Phosphoserine is present on residues S315, S591, and S594. Disordered regions lie at residues 663–688 (FEER…NALN) and 763–831 (CSSS…CIIS). The segment covering 669–680 (RSHHHRRRRSRK) has biased composition (basic residues). S683 is subject to Phosphoserine. A compositionally biased stretch (basic residues) spans 815-831 (TKSKKKKGHKGKNCIIS). C828 carries the cysteine methyl ester modification. Residue C828 is the site of S-farnesyl cysteine attachment. The propeptide at 829–831 (IIS) is removed in mature form.

The protein belongs to the prickle / espinas / testin family. Interacts with REST. In terms of tissue distribution, expressed at highest levels in placenta and at lower levels in lung, liver, kidney and pancreas. Expressed in thalamus, hippocampus, cerebral cortex, and cerebellum (in neurons rather than glia).

The protein resides in the nucleus membrane. Its subcellular location is the cytoplasm. It is found in the cytosol. Involved in the planar cell polarity pathway that controls convergent extension during gastrulation and neural tube closure. Convergent extension is a complex morphogenetic process during which cells elongate, move mediolaterally, and intercalate between neighboring cells, leading to convergence toward the mediolateral axis and extension along the anteroposterior axis. Necessary for nuclear localization of REST. May serve as nuclear receptor. The protein is Prickle-like protein 1 (PRICKLE1) of Homo sapiens (Human).